Here is a 138-residue protein sequence, read N- to C-terminus: Thyrotropin subunit beta (138 aa).

Positions 1–20 (MSAAVLLSVLFALACGQAAS) are cleaved as a signal peptide. Cystine bridges form between C22–C72, C36–C87, C39–C125, C47–C103, C51–C105, and C108–C115. N-linked (GlcNAc...) asparagine glycosylation occurs at N43. The propeptide occupies 133–138 (LGGFSV).

Belongs to the glycoprotein hormones subunit beta family. Heterodimer of a common alpha chain and a unique beta chain which confers biological specificity to thyrotropin, lutropin, follitropin and gonadotropin.

It is found in the secreted. Its function is as follows. Indispensable for the control of thyroid structure and metabolism. In Mus musculus (Mouse), this protein is Thyrotropin subunit beta (Tshb).